Reading from the N-terminus, the 352-residue chain is Ion-translocating oxidoreductase complex subunit D (352 aa).

A run of 4 helical transmembrane segments spans residues 20 to 40 (IMLL…WFFG), 42 to 62 (GTLV…ALVL), 89 to 109 (IPPL…AIIA), and 123 to 143 (PAMI…TSWL). Residue T187 is modified to FMN phosphoryl threonine. The next 5 membrane-spanning stretches (helical) occupy residues 214–234 (ILAG…GLWL), 242–262 (WHIP…GWLF), 267–287 (LAAP…FFIL), 301–321 (LIFG…GGYP), and 322–342 (DGVA…DYYT).

Belongs to the NqrB/RnfD family. As to quaternary structure, the complex is composed of six subunits: RsxA, RsxB, RsxC, RsxD, RsxE and RsxG. FMN is required as a cofactor.

The protein resides in the cell inner membrane. Functionally, part of a membrane-bound complex that couples electron transfer with translocation of ions across the membrane. Required to maintain the reduced state of SoxR. The chain is Ion-translocating oxidoreductase complex subunit D from Escherichia coli (strain ATCC 8739 / DSM 1576 / NBRC 3972 / NCIMB 8545 / WDCM 00012 / Crooks).